Here is a 270-residue protein sequence, read N- to C-terminus: tRNA pseudouridine synthase A (270 aa).

Catalysis depends on D60, which acts as the Nucleophile. Residue Y118 participates in substrate binding.

The protein belongs to the tRNA pseudouridine synthase TruA family. Homodimer.

It catalyses the reaction uridine(38/39/40) in tRNA = pseudouridine(38/39/40) in tRNA. Functionally, formation of pseudouridine at positions 38, 39 and 40 in the anticodon stem and loop of transfer RNAs. The protein is tRNA pseudouridine synthase A of Salmonella typhimurium (strain LT2 / SGSC1412 / ATCC 700720).